Reading from the N-terminus, the 396-residue chain is OTU domain-containing protein 3 (396 aa).

Residues 1-49 (MSRKQAAKSRPGSGGRRAEAERKRDERAARRALAKERRNRPDPGGSGCE) form a disordered region. Residues 16-41 (RRAEAERKRDERAARRALAKERRNRP) are compositionally biased toward basic and acidic residues. One can recognise an OTU domain in the interval 64-188 (LKLREVPGDG…GEHYDSVRRI (125 aa)). Lys-65 carries the N6-acetyllysine modification. The interval 69-75 (VPGDGNC) is cys-loop. Asp-72 is an active-site residue. Cys-75 (nucleophile) is an active-site residue. Lys-121 and Lys-128 each carry N6-acetyllysine. Residues 126 to 136 (LSKPGTFAGND) form a variable-loop region. The his-loop stretch occupies residues 176-181 (YRYGEH). The active site involves His-181. Lys-219 carries the N6-acetyllysine modification. Residues 229-269 (DDVEDAVHKVGSATGCTDFNLIVQNLEAENYNIKSAITALL) form the UBA-like domain. The segment at 275 to 381 (TGNDAEENHE…RDTGRSEADM (107 aa)) is disordered. Basic and acidic residues-rich tracts occupy residues 280–301 (EENH…EAGS), 312–331 (NEGR…ESKA), and 343–379 (QRRE…RSEA). Lys-290 carries the N6-acetyllysine modification.

Post-translationally, glucose and fatty acids stimulate CREBBP-dependent acetylation, promoting its nuclear translocation.

It is found in the cytoplasm. It localises to the nucleus. The enzyme catalyses Thiol-dependent hydrolysis of ester, thioester, amide, peptide and isopeptide bonds formed by the C-terminal Gly of ubiquitin (a 76-residue protein attached to proteins as an intracellular targeting signal).. In terms of biological role, deubiquitinating enzyme that hydrolyzes 'Lys-6'- and 'Lys-11'-linked polyubiquitin. Also hydrolyzes heterotypic (mixed and branched) and homotypic chains. Important regulator of energy metabolism. Glucose and fatty acids trigger its nuclear translocation by CBP-dependent acetylation. In the nucleus, deubiquitinates and stabilizes the nuclear receptor PPARD regulating the expression of various genes involved in glucose and lipid metabolism and oxidative phosphorylation. Also acts as a negative regulator of the ribosome quality control (RQC) by mediating deubiquitination of 40S ribosomal proteins RPS10/eS10 and RPS20/uS10, thereby antagonizing ZNF598-mediated 40S ubiquitination. This is OTU domain-containing protein 3 (Otud3) from Mus musculus (Mouse).